The following is a 264-amino-acid chain: ATP synthase subunit a (264 aa).

Transmembrane regions (helical) follow at residues 29–49, 90–110, 134–154, 177–197, 208–228, and 235–255; these read TWHIDSLFFSVGLGVLFLWIF, IAPLALTIFVWVFMMNFMDMI, DVNITFSLAIGVFLLIIFYSI, IPVNLLLETVTLIAKPISLAL, LIFILIALMYGTNLLLSTLGV, and LIFHILVITLQAFIFMMLTIV.

It belongs to the ATPase A chain family. As to quaternary structure, F-type ATPases have 2 components, CF(1) - the catalytic core - and CF(0) - the membrane proton channel. CF(1) has five subunits: alpha(3), beta(3), gamma(1), delta(1), epsilon(1). CF(0) has three main subunits: a(1), b(2) and c(9-12). The alpha and beta chains form an alternating ring which encloses part of the gamma chain. CF(1) is attached to CF(0) by a central stalk formed by the gamma and epsilon chains, while a peripheral stalk is formed by the delta and b chains.

The protein resides in the cell inner membrane. Its function is as follows. Key component of the proton channel; it plays a direct role in the translocation of protons across the membrane. The sequence is that of ATP synthase subunit a from Shewanella baltica (strain OS223).